Reading from the N-terminus, the 460-residue chain is Serine protease HTRA1 (460 aa).

Positions 1–18 (MAMLWLAVLLTCGAPAAL) are cleaved as a signal peptide. The IGFBP N-terminal domain maps to 22–92 (SGVGCPSRCD…NGGVARCQCP (71 aa)). 8 disulfides stabilise this stretch: C26–C51, C30–C53, C35–C54, C42–C57, C65–C80, C74–C89, C91–C109, and C98–C134. The 63-residue stretch at 74–136 (CASGLRCVKN…IPIQRGDCQQ (63 aa)) folds into the Kazal-like domain. The serine protease stretch occupies residues 183-343 (GSGFIVSEDG…IPSDKIRKFL (161 aa)). Residues H199, D229, and S307 each act as charge relay system in the active site. Residues 344–447 (AESHNRQSTG…LHLVIRRGNE (104 aa)) form the PDZ domain.

The protein belongs to the peptidase S1C family. As to quaternary structure, forms homotrimers. In the presence of substrate, may form higher-order multimers in a PDZ-independent manner.

The protein resides in the cell membrane. It is found in the secreted. Its subcellular location is the cytoplasm. The protein localises to the cytosol. Its function is as follows. Serine protease with a variety of targets, including extracellular matrix proteins and proteoglycans such as biglycan, syndecan-4 and glypican-4. Through cleavage of proteoglycans, may release soluble FGF-glycosaminoglycan complexes that promote the range and intensity of FGF signals in the extracellular space. Consequently, facilitates inductive processes in the developing embryo, such as posteriorization, mesoderm induction and neuronal differentiation. Regulates the availability of insulin-like growth factors (IGFs) by cleaving IGF-binding proteins. Inhibits signaling mediated by TGF-beta family members. Consequently, may regulate many physiological processes. Intracellularly, degrades TSC2, leading to the activation of TSC2 downstream targets. The protein is Serine protease HTRA1 (htra1) of Xenopus tropicalis (Western clawed frog).